A 4083-amino-acid polypeptide reads, in one-letter code: Dynein heavy chain, cytoplasmic (4083 aa).

The stem stretch occupies residues 1 to 1745; sequence MTDDQVAQAL…TIEQSCVSFC (1745 aa). 3 coiled-coil regions span residues 127 to 166, 381 to 402, and 801 to 821; these read DAVV…FIEV, INQW…MRKR, and KLDL…VDQA. AAA regions lie at residues 1746–1967, 2026–2265, 2373–2622, and 2716–2980; these read YGFE…VLRN, SYLA…YKAD, SLES…WVRG, and TFAE…GNSQ. ATP is bound by residues 1784–1791, 2064–2071, 2412–2419, and 2754–2761; these read GPAGTGKT, GDAGTGKT, GPPGSGKT, and GPNYSGKT. A stalk region spans residues 2987–3294; that stretch reads LTSLRRFQSL…RSIKLMESLT (308 aa). Coiled-coil stretches lie at residues 3015 to 3085, 3223 to 3302, and 3527 to 3607; these read LEKL…NERR, LKEE…RWIK, and LEKE…VEDL. 2 AAA regions span residues 3364-3592 and 3748-3952; these read MVNP…EIAK and LKSL…FLDH.

Belongs to the dynein heavy chain family. In terms of assembly, consists of at least two heavy chains and a number of intermediate and light chains.

Its subcellular location is the cytoplasm. The protein resides in the cytoskeleton. Cytoplasmic dynein acts as a motor for the intracellular retrograde motility of vesicles and organelles along microtubules. Dynein has ATPase activity; the force-producing power stroke is thought to occur on release of ADP. Required to maintain uniform nuclear distribution in hyphae. May play an important role in the proper orientation of the mitotic spindle into the budding daughter cell yeast. Probably required for normal progression of the cell cycle. This Eremothecium gossypii (strain ATCC 10895 / CBS 109.51 / FGSC 9923 / NRRL Y-1056) (Yeast) protein is Dynein heavy chain, cytoplasmic (DYN1).